A 656-amino-acid polypeptide reads, in one-letter code: Hemocyanin subunit A (656 aa).

The first 18 residues, methionine 1–alanine 18, serve as a signal peptide directing secretion. Cu cation contacts are provided by histidine 197, histidine 201, and histidine 227. A glycan (N-linked (GlcNAc...) asparagine) is linked at asparagine 313. Histidine 348, histidine 352, and histidine 388 together coordinate Cu cation. Residues cysteine 558 and cysteine 606 are joined by a disulfide bond.

It belongs to the tyrosinase family. Hemocyanin subfamily. 36-chain polymer consisting of 6 hexamers, each of which includes 4 different chains, A, B, C and D. In terms of tissue distribution, hemolymph.

The protein localises to the secreted. It is found in the extracellular space. Its function is as follows. Hemocyanins are copper-containing oxygen carriers occurring freely dissolved in the hemolymph of many mollusks and arthropods. This Scutigera coleoptrata (House centipede) protein is Hemocyanin subunit A (HCA).